Reading from the N-terminus, the 509-residue chain is 2,3-bisphosphoglycerate-independent phosphoglycerate mutase (509 aa).

Position 11 (Asp11) interacts with Mn(2+). Tyr35 is modified (phosphotyrosine). Ser61 lines the Mn(2+) pocket. The Phosphoserine intermediate role is filled by Ser61. Substrate is bound by residues His122, 152-153 (RD), Arg184, Arg190, 260-263 (RPDR), and Lys335. The Mn(2+) site is built by Asp402, His406, Asp443, His444, and His461.

The protein belongs to the BPG-independent phosphoglycerate mutase family. Monomer. Mn(2+) serves as cofactor.

It catalyses the reaction (2R)-2-phosphoglycerate = (2R)-3-phosphoglycerate. It participates in carbohydrate degradation; glycolysis; pyruvate from D-glyceraldehyde 3-phosphate: step 3/5. Functionally, essential for rapid growth and for sporulation. Catalyzes the interconversion of 2-phosphoglycerate and 3-phosphoglycerate. The sequence is that of 2,3-bisphosphoglycerate-independent phosphoglycerate mutase from Bacillus cereus (strain ATCC 10987 / NRS 248).